Here is a 119-residue protein sequence, read N- to C-terminus: Ribonuclease P protein component (119 aa).

This sequence belongs to the RnpA family. As to quaternary structure, consists of a catalytic RNA component (M1 or rnpB) and a protein subunit.

The enzyme catalyses Endonucleolytic cleavage of RNA, removing 5'-extranucleotides from tRNA precursor.. RNaseP catalyzes the removal of the 5'-leader sequence from pre-tRNA to produce the mature 5'-terminus. It can also cleave other RNA substrates such as 4.5S RNA. The protein component plays an auxiliary but essential role in vivo by binding to the 5'-leader sequence and broadening the substrate specificity of the ribozyme. The chain is Ribonuclease P protein component from Borreliella burgdorferi (strain ZS7) (Borrelia burgdorferi).